A 66-amino-acid chain; its full sequence is Large ribosomal subunit protein bL35 (66 aa).

2 stretches are compositionally biased toward basic residues: residues 1–16 and 23–45; these read MPKF…RFKR and KRSH…RQLR. Residues 1-66 are disordered; it reads MPKFKTHRAS…RIRQMLSGLK (66 aa).

This sequence belongs to the bacterial ribosomal protein bL35 family.

The chain is Large ribosomal subunit protein bL35 from Latilactobacillus sakei subsp. sakei (strain 23K) (Lactobacillus sakei subsp. sakei).